The chain runs to 59 residues: Large ribosomal subunit protein uL30 (59 aa).

This sequence belongs to the universal ribosomal protein uL30 family. In terms of assembly, part of the 50S ribosomal subunit.

The protein is Large ribosomal subunit protein uL30 of Solidesulfovibrio magneticus (strain ATCC 700980 / DSM 13731 / RS-1) (Desulfovibrio magneticus).